A 321-amino-acid polypeptide reads, in one-letter code: Serine/threonine-protein phosphatase PP1 (321 aa).

Residues Asp60, His62, Asp88, and Asn120 each coordinate Mn(2+). His121 serves as the catalytic Proton donor. Mn(2+) is bound by residues His169 and His244. Residues 298 to 321 form a disordered region; sequence KKLTNDSNGRPLTPPRNKQQKPKK.

It belongs to the PPP phosphatase family. Interacts with dpiA. Mn(2+) is required as a cofactor.

The enzyme catalyses O-phospho-L-seryl-[protein] + H2O = L-seryl-[protein] + phosphate. It catalyses the reaction O-phospho-L-threonyl-[protein] + H2O = L-threonyl-[protein] + phosphate. With respect to regulation, inhibited by okadaic acid, tautomycin and calyculin A. Inhibited by phosphatase inhibitor 2 (dpiA). In terms of biological role, protein phosphatase activity in vitro. This Dictyostelium discoideum (Social amoeba) protein is Serine/threonine-protein phosphatase PP1 (pppB).